We begin with the raw amino-acid sequence, 365 residues long: Phosphoserine aminotransferase (365 aa).

Position 42 (Arg-42) interacts with L-glutamate. Pyridoxal 5'-phosphate is bound by residues 76–77, Trp-103, Thr-154, Asp-175, and Gln-198; that span reads AR. Position 199 is an N6-(pyridoxal phosphate)lysine (Lys-199). 242–243 serves as a coordination point for pyridoxal 5'-phosphate; sequence NT.

The protein belongs to the class-V pyridoxal-phosphate-dependent aminotransferase family. SerC subfamily. In terms of assembly, homodimer. It depends on pyridoxal 5'-phosphate as a cofactor.

The protein localises to the cytoplasm. The enzyme catalyses O-phospho-L-serine + 2-oxoglutarate = 3-phosphooxypyruvate + L-glutamate. It catalyses the reaction 4-(phosphooxy)-L-threonine + 2-oxoglutarate = (R)-3-hydroxy-2-oxo-4-phosphooxybutanoate + L-glutamate. Its pathway is amino-acid biosynthesis; L-serine biosynthesis; L-serine from 3-phospho-D-glycerate: step 2/3. It functions in the pathway cofactor biosynthesis; pyridoxine 5'-phosphate biosynthesis; pyridoxine 5'-phosphate from D-erythrose 4-phosphate: step 3/5. Catalyzes the reversible conversion of 3-phosphohydroxypyruvate to phosphoserine and of 3-hydroxy-2-oxo-4-phosphonooxybutanoate to phosphohydroxythreonine. The sequence is that of Phosphoserine aminotransferase from Blochmanniella floridana.